The primary structure comprises 122 residues: Large ribosomal subunit protein uL14 (122 aa).

It belongs to the universal ribosomal protein uL14 family. Part of the 50S ribosomal subunit. Forms a cluster with proteins L3 and L19. In the 70S ribosome, L14 and L19 interact and together make contacts with the 16S rRNA in bridges B5 and B8.

In terms of biological role, binds to 23S rRNA. Forms part of two intersubunit bridges in the 70S ribosome. The polypeptide is Large ribosomal subunit protein uL14 (Bradyrhizobium sp. (strain BTAi1 / ATCC BAA-1182)).